The primary structure comprises 639 residues: 1-deoxy-D-xylulose-5-phosphate synthase 1 (639 aa).

Residues histidine 79 and 120-122 (AHS) contribute to the thiamine diphosphate site. Position 155 (aspartate 155) interacts with Mg(2+). Residues 156–157 (GA), asparagine 184, tyrosine 293, and glutamate 373 contribute to the thiamine diphosphate site. Asparagine 184 contributes to the Mg(2+) binding site.

The protein belongs to the transketolase family. DXPS subfamily. In terms of assembly, homodimer. It depends on Mg(2+) as a cofactor. The cofactor is thiamine diphosphate.

It carries out the reaction D-glyceraldehyde 3-phosphate + pyruvate + H(+) = 1-deoxy-D-xylulose 5-phosphate + CO2. It functions in the pathway metabolic intermediate biosynthesis; 1-deoxy-D-xylulose 5-phosphate biosynthesis; 1-deoxy-D-xylulose 5-phosphate from D-glyceraldehyde 3-phosphate and pyruvate: step 1/1. Catalyzes the acyloin condensation reaction between C atoms 2 and 3 of pyruvate and glyceraldehyde 3-phosphate to yield 1-deoxy-D-xylulose-5-phosphate (DXP). The polypeptide is 1-deoxy-D-xylulose-5-phosphate synthase 1 (Jannaschia sp. (strain CCS1)).